The following is a 510-amino-acid chain: Maturase K (510 aa).

This sequence belongs to the intron maturase 2 family. MatK subfamily.

The protein localises to the plastid. It localises to the chloroplast. In terms of biological role, usually encoded in the trnK tRNA gene intron. Probably assists in splicing its own and other chloroplast group II introns. This is Maturase K from Populus nigra (Lombardy poplar).